Consider the following 368-residue polypeptide: Uroporphyrinogen decarboxylase (368 aa).

Residues 41–45, Asp91, Tyr168, Ser223, and His345 contribute to the substrate site; that span reads RQAGR.

The protein belongs to the uroporphyrinogen decarboxylase family. As to quaternary structure, homodimer.

The protein localises to the cytoplasm. It carries out the reaction uroporphyrinogen III + 4 H(+) = coproporphyrinogen III + 4 CO2. The protein operates within porphyrin-containing compound metabolism; protoporphyrin-IX biosynthesis; coproporphyrinogen-III from 5-aminolevulinate: step 4/4. In terms of biological role, catalyzes the decarboxylation of four acetate groups of uroporphyrinogen-III to yield coproporphyrinogen-III. The sequence is that of Uroporphyrinogen decarboxylase from Psychrobacter sp. (strain PRwf-1).